We begin with the raw amino-acid sequence, 406 residues long: Sorting nexin-6 (406 aa).

Met-1 is modified (N-acetylmethionine). An N-acetylmethionine; in Sorting nexin-6, N-terminally processed modification is found at Met-2. The interval 2-179 (MEGLDDGPDF…NQDLSVRGKN (178 aa)) is interaction with PIM1. One can recognise a PX domain in the interval 26-173 (LQSDAALQVD…HVFLEYNQDL (148 aa)). A 1,2-diacyl-sn-glycero-3-phospho-(1D-myo-inositol-4,5-bisphosphate) contacts are provided by residues 41 to 47 (SERDKVK), 100 to 106 (FDASREK), and 114 to 117 (EGSM). A phosphoserine mark is found at Ser-116 and Ser-194. The segment at 182–199 (EKLEDFFKNMVKSADGVI) is membrane-binding amphipathic helix. Residues 203 to 406 (VKDVDDFFEH…NCLAVLNGDT (204 aa)) enclose the BAR domain.

Belongs to the sorting nexin family. In terms of assembly, forms heterodimers with BAR domain-containing sorting nexins SNX1 and SNX2. The heterodimers are proposed to self-assemble into helical arrays on the membrane to stabilize and expand local membrane curvature underlying endosomal tubule formation. Thought to be a component of the originally described retromer complex (also called SNX-BAR retromer) which is a pentamer containing the heterotrimeric retromer cargo-selective complex (CSC), also described as vacuolar protein sorting subcomplex (VPS), and a heterodimeric membrane-deforming subcomplex formed between SNX1 or SNX2 and SNX5 or SNX6 (also called SNX-BAR subcomplex); the respective CSC and SNX-BAR subcomplexes associate with low affinity. Interacts with SNX1, SNX2, VPS26A, VPS29, VPS35, TGFB receptors, BACE1, BRMS1, PIP5K1C. Interacts with DCTN1; the association with DCTN1 is involved in movement of retromer-c ontaining vesicles toward the TGN. Interacts with PIM1; translocating SNX6 to the nucleus. Interacts with CDKN1B and GIT1. Post-translationally, in vitro phosphorylated by PIM1; not affecting PIM1-dependent nuclear translocation.

It is found in the early endosome membrane. The protein localises to the cytoplasmic vesicle. Its subcellular location is the cytoplasm. It localises to the nucleus. Functionally, involved in several stages of intracellular trafficking. Interacts with membranes phosphatidylinositol 3,4-bisphosphate and/or phosphatidylinositol 4,5-bisphosphate. Acts in part as component of the retromer membrane-deforming SNX-BAR subcomplex. The SNX-BAR retromer mediates retrograde transport of cargo proteins from endosomes to the trans-Golgi network (TGN) and is involved in endosome-to-plasma membrane transport for cargo protein recycling. The SNX-BAR subcomplex functions to deform the donor membrane into a tubular profile called endosome-to-TGN transport carrier (ETC). Does not have in vitro vesicle-to-membrane remodeling activity. Involved in retrograde endosome-to-TGN transport of lysosomal enzyme receptor IGF2R. May function as link between transport vesicles and dynactin. Negatively regulates retrograde transport of BACE1 from the cell surface to the trans-Golgi network. Involved in E-cadherin sorting and degradation; inhibits PIP5K1C-mediated E-cadherin degradation. In association with GIT1 involved in EGFR degradation. Promotes lysosomal degradation of CDKN1B. May contribute to transcription regulation. The protein is Sorting nexin-6 (SNX6) of Pongo abelii (Sumatran orangutan).